A 295-amino-acid chain; its full sequence is Ribosomal protein L11 methyltransferase (295 aa).

Positions 150, 171, 193, and 232 each coordinate S-adenosyl-L-methionine.

This sequence belongs to the methyltransferase superfamily. PrmA family.

The protein resides in the cytoplasm. It carries out the reaction L-lysyl-[protein] + 3 S-adenosyl-L-methionine = N(6),N(6),N(6)-trimethyl-L-lysyl-[protein] + 3 S-adenosyl-L-homocysteine + 3 H(+). Its function is as follows. Methylates ribosomal protein L11. The sequence is that of Ribosomal protein L11 methyltransferase from Neisseria meningitidis serogroup B (strain ATCC BAA-335 / MC58).